The chain runs to 397 residues: MTTLLNPYFGEFGGMYVPQILMPALRQLEEAFVSAQKDPEFQAQFADLLKNYAGRPTALTKCQNITAGTRTTLYLKREDLLHGGAHKTNQVLGQALLAKRMGKSEIIAETGAGQHGVASALASALLGLKCRIYMGAKDVERQSPNVFRMRLMGAQVIPVHSGSATLKDACNEALRDWSGSYETAHYMLGTAAGPHPYPTIVREFQRMIGEETKSQILDKEGRLPDAVIACVGGGSNAIGMFADFINDASVGLIGVEPGGHGIETGEHGAPLKHGRVGIYFGMKAPMMQTADGQIEESYSISAGLDFPSVGPQHAHLNSIGRADYVSITDDEALEAFKTLCRHEGIIPALESSHALAHALKMMREHPEKEQLLVVNLSGRGDKDIFTVHDILKARGEI.

An N6-(pyridoxal phosphate)lysine modification is found at Lys-87.

This sequence belongs to the TrpB family. As to quaternary structure, tetramer of two alpha and two beta chains. Requires pyridoxal 5'-phosphate as cofactor.

The enzyme catalyses (1S,2R)-1-C-(indol-3-yl)glycerol 3-phosphate + L-serine = D-glyceraldehyde 3-phosphate + L-tryptophan + H2O. The protein operates within amino-acid biosynthesis; L-tryptophan biosynthesis; L-tryptophan from chorismate: step 5/5. Functionally, the beta subunit is responsible for the synthesis of L-tryptophan from indole and L-serine. In Salmonella arizonae (strain ATCC BAA-731 / CDC346-86 / RSK2980), this protein is Tryptophan synthase beta chain.